A 258-amino-acid polypeptide reads, in one-letter code: Small ribosomal subunit protein mS23 (258 aa).

Belongs to the mitochondrion-specific ribosomal protein mS23 family. Component of the mitochondrial small ribosomal subunit.

Its subcellular location is the mitochondrion. In Aspergillus fumigatus (strain ATCC MYA-4609 / CBS 101355 / FGSC A1100 / Af293) (Neosartorya fumigata), this protein is Small ribosomal subunit protein mS23 (rsm25).